Here is a 108-residue protein sequence, read N- to C-terminus: UPF0060 membrane protein YnfA (108 aa).

Topologically, residues 1–5 (MIKTT) are periplasmic. Residues 6-26 (LLFFATALCEIIGCFLPWLWL) form a helical membrane-spanning segment. The Cytoplasmic portion of the chain corresponds to 27–30 (KRNA). A helical transmembrane segment spans residues 31–51 (SIWLLLPAGISLALFVWLLTL). The Periplasmic segment spans residues 52-60 (HPAASGRVY). The helical transmembrane segment at 61–81 (AAYGGVYVCTALMWLRVVDGV) threads the bilayer. Topologically, residues 82 to 84 (KLT) are cytoplasmic. Residues 85–105 (LYDWTGPLIALCGMLIIVVGW) form a helical membrane-spanning segment. The Periplasmic segment spans residues 106 to 108 (GRT).

The protein belongs to the UPF0060 family.

The protein resides in the cell inner membrane. The sequence is that of UPF0060 membrane protein YnfA from Escherichia coli O157:H7.